The chain runs to 292 residues: Peroxisomal 2,4-dienoyl-CoA reductase [(3E)-enoyl-CoA-producing] (292 aa).

At alanine 2 the chain carries N-acetylalanine. NADP(+) contacts are provided by residues glycine 35–isoleucine 40, arginine 60–arginine 64, and aspartate 86. Arginine 60 lines the substrate pocket. Substrate is bound by residues arginine 88, phenylalanine 118, and serine 126–asparagine 128. N6-acetyllysine is present on lysine 151. Residues lysine 182 and proline 208–threonine 214 contribute to the NADP(+) site. Residue arginine 219 coordinates substrate. Serine 287 is modified (phosphoserine). Residues alanine 290–leucine 292 carry the Microbody targeting signal motif. An N6-acetyllysine modification is found at lysine 291.

This sequence belongs to the short-chain dehydrogenases/reductases (SDR) family. 2,4-dienoyl-CoA reductase subfamily. In terms of assembly, monomer, dimer and oligomer.

It is found in the peroxisome. It carries out the reaction a (2E,4Z)-dienoyl-CoA + NADPH + H(+) = a 4,5-saturated-(3E)-enoyl-CoA + NADP(+). It catalyses the reaction a (2E,4E)-dienoyl-CoA + NADPH + H(+) = a 4,5-saturated-(3E)-enoyl-CoA + NADP(+). The catalysed reaction is (2E,4E)-hexadienoyl-CoA + NADPH + H(+) = (3E)-hexenoyl-CoA + NADP(+). The enzyme catalyses (2E,4E)-decadienoyl-CoA + NADPH + H(+) = (3E)-decenoyl-CoA + NADP(+). It carries out the reaction (2E,4Z,7Z,10Z,13Z,16Z,19Z)-docosaheptaenoyl-CoA + NADPH + H(+) = (3E,7Z,10Z,13Z,16Z,19Z)-docosahexaenoyl-CoA + NADP(+). Functionally, auxiliary enzyme of beta-oxidation. Participates in the degradation of unsaturated fatty enoyl-CoA esters having double bonds in both even- and odd-numbered positions in peroxisome. Catalyzes the NADP-dependent reduction of 2,4-dienoyl-CoA to yield trans-3-enoyl-CoA. Has activity towards short and medium chain 2,4-dienoyl-CoAs, but also towards 2,4,7,10,13,16,19-docosaheptaenoyl-CoA, suggesting that it does not constitute a rate limiting step in the peroxisomal degradation of docosahexaenoic acid. The sequence is that of Peroxisomal 2,4-dienoyl-CoA reductase [(3E)-enoyl-CoA-producing] (DECR2) from Pongo abelii (Sumatran orangutan).